Reading from the N-terminus, the 178-residue chain is 2-C-methyl-D-erythritol 2,4-cyclodiphosphate synthase (178 aa).

D24, H26, and H61 together coordinate a divalent metal cation. 24-26 (DSH) contacts 4-CDP-2-C-methyl-D-erythritol 2-phosphate. 4-CDP-2-C-methyl-D-erythritol 2-phosphate is bound at residue 150 to 153 (TSGE).

It belongs to the IspF family. Homotrimer. It depends on a divalent metal cation as a cofactor.

The catalysed reaction is 4-CDP-2-C-methyl-D-erythritol 2-phosphate = 2-C-methyl-D-erythritol 2,4-cyclic diphosphate + CMP. The protein operates within isoprenoid biosynthesis; isopentenyl diphosphate biosynthesis via DXP pathway; isopentenyl diphosphate from 1-deoxy-D-xylulose 5-phosphate: step 4/6. Involved in the biosynthesis of isopentenyl diphosphate (IPP) and dimethylallyl diphosphate (DMAPP), two major building blocks of isoprenoid compounds. Catalyzes the conversion of 4-diphosphocytidyl-2-C-methyl-D-erythritol 2-phosphate (CDP-ME2P) to 2-C-methyl-D-erythritol 2,4-cyclodiphosphate (ME-CPP) with a corresponding release of cytidine 5-monophosphate (CMP). This is 2-C-methyl-D-erythritol 2,4-cyclodiphosphate synthase from Chlamydia muridarum (strain MoPn / Nigg).